The sequence spans 433 residues: UDP-N-acetylglucosamine 1-carboxyvinyltransferase (433 aa).

Residue 22–23 (KN) coordinates phosphoenolpyruvate. Residue Arg96 participates in UDP-N-acetyl-alpha-D-glucosamine binding. Catalysis depends on Cys120, which acts as the Proton donor. The residue at position 120 (Cys120) is a 2-(S-cysteinyl)pyruvic acid O-phosphothioketal. UDP-N-acetyl-alpha-D-glucosamine is bound by residues 125–129 (RPIDL), Asp308, and Ile330.

It belongs to the EPSP synthase family. MurA subfamily.

It is found in the cytoplasm. The catalysed reaction is phosphoenolpyruvate + UDP-N-acetyl-alpha-D-glucosamine = UDP-N-acetyl-3-O-(1-carboxyvinyl)-alpha-D-glucosamine + phosphate. The protein operates within cell wall biogenesis; peptidoglycan biosynthesis. Functionally, cell wall formation. Adds enolpyruvyl to UDP-N-acetylglucosamine. The protein is UDP-N-acetylglucosamine 1-carboxyvinyltransferase of Koribacter versatilis (strain Ellin345).